Here is a 428-residue protein sequence, read N- to C-terminus: Elongation factor 1-alpha (428 aa).

The 213-residue stretch at 5–217 (KPHVNIVFIG…DQIPEPEKPT (213 aa)) folds into the tr-type G domain. The segment at 14–21 (GHVDHGKS) is G1. A GTP-binding site is contributed by 14-21 (GHVDHGKS). Residue Ser-21 participates in Mg(2+) binding. The segment at 68-72 (GITID) is G2. The segment at 89-92 (DAPG) is G3. GTP-binding positions include 89 to 93 (DAPGH) and 144 to 147 (NKMD). Residues 144 to 147 (NKMD) form a G4 region. Positions 181–183 (SAW) are G5.

Belongs to the TRAFAC class translation factor GTPase superfamily. Classic translation factor GTPase family. EF-Tu/EF-1A subfamily.

It localises to the cytoplasm. The catalysed reaction is GTP + H2O = GDP + phosphate + H(+). GTP hydrolase that promotes the GTP-dependent binding of aminoacyl-tRNA to the A-site of ribosomes during protein biosynthesis. This is Elongation factor 1-alpha from Thermococcus sibiricus (strain DSM 12597 / MM 739).